Consider the following 324-residue polypeptide: MKPQPLLLIAIALLCCCVTDEGDKITSLGKIADESIVYVWWSVKAEDRVYLGLGTVDGTSFAEFHPPNRLEILLSSEDFSQREAAVWDGEEILIFGGTVFENGKYSPTDQILSFNPKLERLRVLNASLPHPTSDVAAVWGDSRVYIFLNNSERCEVYAFYPSNESFAKLDVSCPIEHPGGCVHSVVWYGGKAYFFCGEGVASFDPMGGFKWIAFTDRVWVRAATVADGYIFAIGGSSGIAETKDEIIRFNPKTGELCEMRTKLPVARGQAVAVGGEYIYIFGGYTKDGYANEILRYDYRGDKCVNFIQLLNDDVKKYRPNNGKQ.

2 Kelch repeats span residues 229–276 (YIFA…VGGE) and 277–323 (YIYI…NNGK).

The chain is Kelch domain-containing protein AF_2170 from Archaeoglobus fulgidus (strain ATCC 49558 / DSM 4304 / JCM 9628 / NBRC 100126 / VC-16).